We begin with the raw amino-acid sequence, 159 residues long: Cyclic pyranopterin monophosphate synthase (159 aa).

Substrate-binding positions include 76–78 (LCH) and 114–115 (ME). Residue Asp129 is part of the active site.

The protein belongs to the MoaC family. As to quaternary structure, homohexamer; trimer of dimers.

The catalysed reaction is (8S)-3',8-cyclo-7,8-dihydroguanosine 5'-triphosphate = cyclic pyranopterin phosphate + diphosphate. It functions in the pathway cofactor biosynthesis; molybdopterin biosynthesis. Its function is as follows. Catalyzes the conversion of (8S)-3',8-cyclo-7,8-dihydroguanosine 5'-triphosphate to cyclic pyranopterin monophosphate (cPMP). The polypeptide is Cyclic pyranopterin monophosphate synthase (Oleidesulfovibrio alaskensis (strain ATCC BAA-1058 / DSM 17464 / G20) (Desulfovibrio alaskensis)).